A 212-amino-acid chain; its full sequence is Thymidylate kinase (212 aa).

A2 carries the N-acetylalanine modification. ATP is bound by residues 16–21 and R97; that span reads RAGKST. The interval 133 to 157 is LID; that stretch reads LQLQLADAAKRGAFGHERYENGAFQ. Position 169 is an N6-acetyllysine (K169). Positions 182 and 192 each coordinate ATP.

The protein belongs to the thymidylate kinase family. As to quaternary structure, homodimer. Mg(2+) serves as cofactor.

The enzyme catalyses dTMP + ATP = dTDP + ADP. It participates in pyrimidine metabolism; dTTP biosynthesis. In terms of biological role, catalyzes the phosphorylation of thymidine monophosphate (dTMP) to thymidine diphosphate (dTDP), the immediate precursor for the DNA building block dTTP, with ATP as the preferred phosphoryl donor in the presence of Mg(2+). This is Thymidylate kinase (DTYMK) from Homo sapiens (Human).